The sequence spans 132 residues: Small ribosomal subunit protein uS8 (132 aa).

This sequence belongs to the universal ribosomal protein uS8 family. As to quaternary structure, part of the 30S ribosomal subunit. Contacts proteins S5 and S12.

Its function is as follows. One of the primary rRNA binding proteins, it binds directly to 16S rRNA central domain where it helps coordinate assembly of the platform of the 30S subunit. This chain is Small ribosomal subunit protein uS8, found in Streptococcus equi subsp. equi (strain 4047).